The chain runs to 427 residues: Endothelin-1 receptor (427 aa).

An N-terminal signal peptide occupies residues 1-20; the sequence is MSIFCLAAYFWLTMVGGVMA. Residues 21 to 80 lie on the Extracellular side of the membrane; that stretch reads DNPERYSANLSSHMEDFTPFPGTEINFLGTTHRPPNLALPSNGSMHGYCPQQTKITTAFK. 2 N-linked (GlcNAc...) asparagine glycosylation sites follow: asparagine 29 and asparagine 62. The chain crosses the membrane as a helical span at residues 81-102; the sequence is YINTVISCTIFIVGMVGNATLL. Topologically, residues 103–112 are cytoplasmic; sequence RIIYQNKCMR. The helical transmembrane segment at 113 to 132 threads the bilayer; the sequence is NGPNALIASLALGDLIYVVI. The Extracellular segment spans residues 133 to 159; sequence DLPINVFKLLAGRWPFDHNDFGVFLCK. Cysteine 158 and cysteine 239 are joined by a disulfide. Residues 160-181 form a helical membrane-spanning segment; sequence LFPFLQKSSVGITVLNLCALSV. Residues 182 to 205 lie on the Cytoplasmic side of the membrane; that stretch reads DRYRAVASWSRVQGIGIPLITAIE. A helical transmembrane segment spans residues 206 to 229; that stretch reads IVSIWILSFILAIPEAIGFVMVPF. Over 230–256 the chain is Extracellular; the sequence is EYKGELHRTCMLNATSKFMEFYQDVKD. Asparagine 242 carries an N-linked (GlcNAc...) asparagine glycan. Residues 257 to 278 traverse the membrane as a helical segment; the sequence is WWLFGFYFCMPLVCTAIFYTLM. The Cytoplasmic segment spans residues 279–306; the sequence is TCEMLNRRNGSLRIALSEHLKQRREVAK. A helical membrane pass occupies residues 307–328; it reads TVFCLVVIFALCWFPLHLSRIL. Residues 329–347 lie on the Extracellular side of the membrane; that stretch reads KKTVYDEMDKNRCELLSFL. A helical membrane pass occupies residues 348 to 372; that stretch reads LLMDYIGINLATMNSCINPIALYFV. Over 373 to 427 the chain is Cytoplasmic; sequence SKKFKNCFQSCLCCCCHQSKSLMTSVPMNGTSIQWKNQEQNNHNTERSSHKDSMN. The disordered stretch occupies residues 408 to 427; it reads KNQEQNNHNTERSSHKDSMN. Basic and acidic residues predominate over residues 416 to 427; sequence NTERSSHKDSMN. Serine 425 carries the phosphoserine modification.

It belongs to the G-protein coupled receptor 1 family. Endothelin receptor subfamily. EDNRA sub-subfamily. In terms of assembly, interacts with HDAC7 and KAT5.

The protein localises to the cell membrane. In terms of biological role, receptor for endothelin-1. Mediates its action by association with G proteins that activate a phosphatidylinositol-calcium second messenger system. The rank order of binding affinities for ET-A is: ET1 &gt; ET2 &gt;&gt; ET3. The protein is Endothelin-1 receptor of Mus musculus (Mouse).